We begin with the raw amino-acid sequence, 320 residues long: Malate dehydrogenase (320 aa).

Residues 10-15 (GSGMIG) and Asp-34 contribute to the NAD(+) site. Substrate-binding residues include Arg-83 and Arg-89. Residues Asn-96 and 119–121 (ITN) contribute to the NAD(+) site. Substrate contacts are provided by Asn-121 and Arg-152. The Proton acceptor role is filled by His-176.

This sequence belongs to the LDH/MDH superfamily. MDH type 3 family.

The catalysed reaction is (S)-malate + NAD(+) = oxaloacetate + NADH + H(+). Its function is as follows. Catalyzes the reversible oxidation of malate to oxaloacetate. This is Malate dehydrogenase from Brucella anthropi (strain ATCC 49188 / DSM 6882 / CCUG 24695 / JCM 21032 / LMG 3331 / NBRC 15819 / NCTC 12168 / Alc 37) (Ochrobactrum anthropi).